A 118-amino-acid polypeptide reads, in one-letter code: MRNKYIEAFENAQISNKNVPDFRAGDTLKLAIRIKEGEKTRIQNFEGICIARRGSGVGETFIVRKIGANGIGVERIFPIYSESLENIEVLRKGNVRRSKLFYLRDRRGKAAKIKELRK.

This sequence belongs to the bacterial ribosomal protein bL19 family.

Functionally, this protein is located at the 30S-50S ribosomal subunit interface and may play a role in the structure and function of the aminoacyl-tRNA binding site. In Campylobacter hominis (strain ATCC BAA-381 / DSM 21671 / CCUG 45161 / LMG 19568 / NCTC 13146 / CH001A), this protein is Large ribosomal subunit protein bL19.